Reading from the N-terminus, the 507-residue chain is ATP synthase subunit alpha, chloroplastic (507 aa).

170–177 provides a ligand contact to ATP; that stretch reads GDRQTGKT.

It belongs to the ATPase alpha/beta chains family. F-type ATPases have 2 components, CF(1) - the catalytic core - and CF(0) - the membrane proton channel. CF(1) has five subunits: alpha(3), beta(3), gamma(1), delta(1), epsilon(1). CF(0) has four main subunits: a, b, b' and c.

The protein resides in the plastid. The protein localises to the chloroplast thylakoid membrane. It carries out the reaction ATP + H2O + 4 H(+)(in) = ADP + phosphate + 5 H(+)(out). Its function is as follows. Produces ATP from ADP in the presence of a proton gradient across the membrane. The alpha chain is a regulatory subunit. This chain is ATP synthase subunit alpha, chloroplastic, found in Cycas taitungensis (Prince sago).